We begin with the raw amino-acid sequence, 459 residues long: Cysteine--tRNA ligase (459 aa).

C28 lines the Zn(2+) pocket. A 'HIGH' region motif is present at residues 30-40 (VTVYDLCHIGH). Positions 209, 234, and 238 each coordinate Zn(2+). Positions 266–270 (KMSKS) match the 'KMSKS' region motif. K269 serves as a coordination point for ATP.

The protein belongs to the class-I aminoacyl-tRNA synthetase family. In terms of assembly, monomer. It depends on Zn(2+) as a cofactor.

The protein localises to the cytoplasm. The catalysed reaction is tRNA(Cys) + L-cysteine + ATP = L-cysteinyl-tRNA(Cys) + AMP + diphosphate. The sequence is that of Cysteine--tRNA ligase (cysS) from Haemophilus influenzae (strain ATCC 51907 / DSM 11121 / KW20 / Rd).